The primary structure comprises 569 residues: Aspartic proteinase 3 (569 aa).

The N-terminal stretch at Met-1 to Gly-21 is a signal peptide. Residues Lys-22–Arg-67 constitute a propeptide that is removed on maturation. The Peptidase A1 domain maps to Tyr-83–Ala-475. Asn-95 carries N-linked (GlcNAc...) asparagine glycosylation. The active site involves Asp-101. Asn-203, Asn-232, Asn-242, Asn-245, Asn-299, and Asn-358 each carry an N-linked (GlcNAc...) asparagine glycan. The active site involves Asp-371. 3 N-linked (GlcNAc...) asparagine glycosylation sites follow: Asn-480, Asn-522, and Asn-532. Asn-548 carries GPI-anchor amidated asparagine lipidation. The propeptide at Val-549 to Ile-569 is removed in mature form.

It belongs to the peptidase A1 family. In terms of assembly, consists of an alpha and a beta subunit, which are maintained together by a disulfide bond. In terms of processing, the zymogen is transported to the periplasm, where the propeptide is removed and the enzyme is further subjected to an internal, autocatalytic cleavage to generate an alpha/beta two-subunit endopeptidase. The proteolytic processing at the cell surface is regulated by the environmental pH. Post-translationally, extensively N-glycosylated.

It localises to the cell membrane. It carries out the reaction Hydrolyzes various precursor proteins with Arg or Lys in P1, and commonly Arg or Lys also in P2. The P3 amino acid is usually non-polar, but otherwise additional basic amino acids are favorable in both non-prime and prime positions.. Cleaves proteins C-terminally to mono- and paired-basic residues. Involved in the shedding of a subset of GPI-anchored plasma membrane proteins from the cell surface, including itself, GAS1 and MSB2. May also play a role in the maturation of GPI-mannoproteins associated with the cell wall. Can process the alpha-mating factor precursor. Required for cell wall integrity. The chain is Aspartic proteinase 3 (YPS1) from Saccharomyces cerevisiae (strain ATCC 204508 / S288c) (Baker's yeast).